The following is a 60-amino-acid chain: UPF0509 protein ESA_01586 (60 aa).

It belongs to the UPF0509 family.

This is UPF0509 protein ESA_01586 from Cronobacter sakazakii (strain ATCC BAA-894) (Enterobacter sakazakii).